A 75-amino-acid chain; its full sequence is Small integral membrane protein 7 (75 aa).

The N-terminal stretch at 1–17 (MIGDILLFGTLLMNAGA) is a signal peptide. Over 18-53 (VLNFKLKKKDTQGFGEESKEPSTGDNIREFLLSLRY) the chain is Extracellular. The helical transmembrane segment at 54–74 (FRIFIALWNVFMMLCMIVLFG) threads the bilayer. Residue Ser75 is a topological domain, cytoplasmic.

This sequence belongs to the SMIM7 family.

The protein resides in the membrane. This chain is Small integral membrane protein 7 (Smim7), found in Mus musculus (Mouse).